Consider the following 106-residue polypeptide: Iron-sulfur cluster assembly protein CyaY (106 aa).

This sequence belongs to the frataxin family.

Its function is as follows. Involved in iron-sulfur (Fe-S) cluster assembly. May act as a regulator of Fe-S biogenesis. This Colwellia psychrerythraea (strain 34H / ATCC BAA-681) (Vibrio psychroerythus) protein is Iron-sulfur cluster assembly protein CyaY.